The following is an 83-amino-acid chain: Exodeoxyribonuclease 7 small subunit (83 aa).

The protein belongs to the XseB family. In terms of assembly, heterooligomer composed of large and small subunits.

It is found in the cytoplasm. It catalyses the reaction Exonucleolytic cleavage in either 5'- to 3'- or 3'- to 5'-direction to yield nucleoside 5'-phosphates.. Functionally, bidirectionally degrades single-stranded DNA into large acid-insoluble oligonucleotides, which are then degraded further into small acid-soluble oligonucleotides. The chain is Exodeoxyribonuclease 7 small subunit from Sinorhizobium medicae (strain WSM419) (Ensifer medicae).